The sequence spans 92 residues: MARSLWKGPFVDGYLLKKADAARGGSRNEVVKIWSRRSTILPQFVGITFGVHNGHKHIPVYVTEEMVGHKFGEFSPTRTFPGHAADKKAKRR.

It belongs to the universal ribosomal protein uS19 family.

In terms of biological role, protein S19 forms a complex with S13 that binds strongly to the 16S ribosomal RNA. The polypeptide is Small ribosomal subunit protein uS19 (Methylorubrum extorquens (strain CM4 / NCIMB 13688) (Methylobacterium extorquens)).